A 363-amino-acid chain; its full sequence is Putative glutamate--cysteine ligase 2 (363 aa).

It belongs to the glutamate--cysteine ligase type 2 family. YbdK subfamily.

The enzyme catalyses L-cysteine + L-glutamate + ATP = gamma-L-glutamyl-L-cysteine + ADP + phosphate + H(+). ATP-dependent carboxylate-amine ligase which exhibits weak glutamate--cysteine ligase activity. This Streptomyces coelicolor (strain ATCC BAA-471 / A3(2) / M145) protein is Putative glutamate--cysteine ligase 2.